Consider the following 940-residue polypeptide: Serine/threonine-protein phosphatase 1 regulatory subunit 10 (940 aa).

The tract at residues 1 to 348 (MGSGPIDPKE…EPAPPSEAME (348 aa)) is interaction with TOX4. The region spanning 73–147 (KLLNNWLTYS…SDWMAVIRSQ (75 aa)) is the TFIIS N-terminal domain. Disordered stretches follow at residues 147-210 (QSST…KFRS), 248-270 (NVAA…NTTP), 304-400 (KIKK…KSVT), and 534-557 (VETL…LPPV). Basic and acidic residues-rich tracts occupy residues 153–166 (AEKD…EGKS) and 174–196 (PLTE…EKPK). A Glycyl lysine isopeptide (Lys-Gly) (interchain with G-Cter in SUMO2) cross-link involves residue Lys-179. A Phosphothreonine modification is found at Thr-256. Residue Lys-262 forms a Glycyl lysine isopeptide (Lys-Gly) (interchain with G-Cter in SUMO2) linkage. Ser-313 is modified (phosphoserine). Residues 325–336 (KTSTEPSTAKPS) are compositionally biased toward low complexity. The interval 357 to 433 (PPVEVPELMD…NKIKDFGEAA (77 aa)) is necessary for interaction with PPP1CA. Position 382 is a phosphoserine (Ser-382). The tract at residues 393 to 408 (GRKRKSVTWPEEGKLR) is necessary for interaction with PPP1CC. The PP1-binding motif signature appears at 394–423 (RKRKSVTWPEEGKLREYFYFELDETERVNV). The residue at position 398 (Ser-398) is a Phosphoserine; by PKA. An interaction with WDR82 region spans residues 418–619 (TERVNVNKIK…IKQMLVPHGL (202 aa)). The segment covering 540–551 (GGSGGSPDGAGG) has biased composition (gly residues). Residues Ser-545 and Ser-591 each carry the phosphoserine modification. The disordered stretch occupies residues 617–905 (HGLLGPGPIA…HDGGHSHGGD (289 aa)). The span at 644–655 (PPGPGGPMPGPH) shows a compositional bias: pro residues. Position 665 is an omega-N-methylarginine (Arg-665). A compositionally biased stretch (low complexity) spans 676–690 (GDPFWDGPGDPMRGG). Omega-N-methylarginine is present on residues Arg-693 and Arg-738. Gly residues-rich tracts occupy residues 725-763 (ARGG…GMGN) and 789-844 (GSMG…GSGG). Basic and acidic residues-rich tracts occupy residues 861–886 (PHDV…HDGP) and 894–903 (RGHDGGHSHG). A C3H1-type zinc finger spans residues 906–934 (MSNRPVCRHFMMKGNCRYENNCAFYHPGV).

As to quaternary structure, component of the PNUTS-PP1 complex (also named PTW/PP1 complex), composed of PPP1R10/PNUTS, TOX4, WDR82, and PPP1CA (or PPP1CB or PPP1CC). Post-translationally, phosphorylated on Ser-398 by PKA within the region necessary for interaction with PPP1CA.

Its subcellular location is the nucleus. It is found in the chromosome. Substrate-recognition component of the PNUTS-PP1 protein phosphatase complex, a protein phosphatase 1 (PP1) complex that promotes RNA polymerase II transcription pause-release, allowing transcription elongation. Promoter-proximal pausing by RNA polymerase II is a transcription halt following transcription initiation but prior to elongation, which acts as a checkpoint to control that transcripts are favorably configured for transcriptional elongation. The PNUTS-PP1 complex mediates the release of RNA polymerase II from promoter-proximal region of genes by catalyzing dephosphorylation of proteins involved in transcription, such as AFF4, CDK9, MEPCE, INTS12, NCBP1, POLR2M/GDOWN1 and SUPT6H. The PNUTS-PP1 complex also regulates RNA polymerase II transcription termination by mediating dephosphorylation of SUPT5H in termination zones downstream of poly(A) sites, thereby promoting deceleration of RNA polymerase II transcription. PNUTS-PP1 complex is also involved in the response to replication stress by mediating dephosphorylation of POLR2A at 'Ser-5' of the CTD, promoting RNA polymerase II degradation. The PNUTS-PP1 complex also plays a role in the control of chromatin structure and cell cycle progression during the transition from mitosis into interphase. PNUTS-PP1 complex mediates dephosphorylation of MYC, promoting MYC stability by preventing MYC ubiquitination by the SCF(FBXW7) complex. In addition to acts as a substrate-recognition component, PPP1R10/PNUTS also acts as a nuclear targeting subunit for the PNUTS-PP1 complex. In some context, PPP1R10/PNUTS also acts as an inhibitor of protein phosphatase 1 (PP1) activity by preventing access to substrates, such as RB. The chain is Serine/threonine-protein phosphatase 1 regulatory subunit 10 (PPP1R10) from Pan troglodytes (Chimpanzee).